We begin with the raw amino-acid sequence, 576 residues long: Sulfite reductase [NADPH] hemoprotein beta-component (576 aa).

[4Fe-4S] cluster is bound by residues Cys435, Cys441, Cys480, and Cys484. Cys484 lines the siroheme pocket.

This sequence belongs to the nitrite and sulfite reductase 4Fe-4S domain family. As to quaternary structure, alpha(8)-beta(8). The alpha component is a flavoprotein, the beta component is a hemoprotein. Siroheme is required as a cofactor. It depends on [4Fe-4S] cluster as a cofactor.

It catalyses the reaction hydrogen sulfide + 3 NADP(+) + 3 H2O = sulfite + 3 NADPH + 4 H(+). Its pathway is sulfur metabolism; hydrogen sulfide biosynthesis; hydrogen sulfide from sulfite (NADPH route): step 1/1. Its function is as follows. Component of the sulfite reductase complex that catalyzes the 6-electron reduction of sulfite to sulfide. This is one of several activities required for the biosynthesis of L-cysteine from sulfate. The chain is Sulfite reductase [NADPH] hemoprotein beta-component from Proteus mirabilis (strain HI4320).